We begin with the raw amino-acid sequence, 296 residues long: Probable endonuclease 4 (296 aa).

Zn(2+)-binding residues include His-68, His-109, Glu-144, Asp-178, His-181, His-213, Asp-226, His-228, and Glu-258.

Belongs to the AP endonuclease 2 family. The cofactor is Zn(2+).

The enzyme catalyses Endonucleolytic cleavage to 5'-phosphooligonucleotide end-products.. Its function is as follows. Endonuclease IV plays a role in DNA repair. It cleaves phosphodiester bonds at apurinic or apyrimidinic (AP) sites, generating a 3'-hydroxyl group and a 5'-terminal sugar phosphate. The sequence is that of Probable endonuclease 4 from Staphylococcus carnosus (strain TM300).